The following is a 276-amino-acid chain: Rhomboid protease GlpG (276 aa).

6 helical membrane passes run 94–114 (GPVT…MQIL), 142–162 (ALMH…WYLG), 169–189 (LGSG…GYVQ), 192–212 (FSGP…GYVW), 229–249 (LIIF…GMSM), and 250–270 (ANGA…VDSL). The active-site Nucleophile is serine 201. The active site involves histidine 254.

Belongs to the peptidase S54 family.

It is found in the cell inner membrane. The enzyme catalyses Cleaves type-1 transmembrane domains using a catalytic dyad composed of serine and histidine that are contributed by different transmembrane domains.. Rhomboid-type serine protease that catalyzes intramembrane proteolysis. The polypeptide is Rhomboid protease GlpG (Escherichia coli O157:H7).